The chain runs to 293 residues: DNA-directed RNA polymerase III subunit rpc6 (293 aa).

Belongs to the eukaryotic RPC34/RPC39 RNA polymerase subunit family. Component of the RNA polymerase III (Pol III) complex.

The protein resides in the nucleus. Functionally, DNA-dependent RNA polymerase catalyzes the transcription of DNA into RNA using the four ribonucleoside triphosphates as substrates. Specific peripheric component of RNA polymerase III which synthesizes small RNAs, such as 5S rRNA and tRNAs. May direct RNA Pol III binding to the TFIIIB-DNA complex. The chain is DNA-directed RNA polymerase III subunit rpc6 (polr3f) from Dictyostelium discoideum (Social amoeba).